The primary structure comprises 437 residues: Keratin, type I cytoskeletal 13 (437 aa).

A head region spans residues 1 to 95 (MSCRFQSSSM…GVDGGLLSGN (95 aa)). 2 positions are modified to omega-N-methylarginine: Arg-27 and Arg-35. The coil 1A stretch occupies residues 96 to 131 (EKITMQNLNDRLASYLDKVRALEAANADLEVKIRDW). The 313-residue stretch at 96 to 408 (EKITMQNLND…SLLEGQDAKM (313 aa)) folds into the IF rod domain. Residues 132 to 150 (HLKQSPASPERDYSAYYKT) are linker 1. A coil 1B region spans residues 151 to 242 (IEELRIKILE…KNHEEEMKEF (92 aa)). Residues 243–265 (SNQVVGQVNVEMDATPGIDLTRV) are linker 12. The coil 2 stretch occupies residues 266 to 404 (LAEMREQYEA…ATYRSLLEGQ (139 aa)). The interval 405-437 (DAKMTGFNSGGNNTTTSNGSPSSNSGRPDFRKY) is tail. The interval 408–437 (MTGFNSGGNNTTTSNGSPSSNSGRPDFRKY) is disordered. Positions 409–430 (TGFNSGGNNTTTSNGSPSSNSG) are enriched in low complexity.

It belongs to the intermediate filament family. Heterotetramer of two type I and two type II keratins. O-glycosylated; glycans consist of single N-acetylglucosamine residues. Expressed in tongue epithelia (at protein level). Expressed in upper suprabasal layers of the corneal epithelium (at protein level).

Functionally, type 1 keratin. Maintains postnatal tongue mucosal cell homeostasis and tissue organization in response to mechanical stress, potentially via regulation of the G1/S phase cyclins CCNE1 and CCNE2. The chain is Keratin, type I cytoskeletal 13 (Krt13) from Mus musculus (Mouse).